A 354-amino-acid chain; its full sequence is Zinc finger protein 346 (354 aa).

4 Matrin-type zinc fingers span residues 34-64, 95-125, 165-195, and 232-262; these read TQCKVCSAVLISESQKLAHYQSRKHANKVRR, KCCPICNMTFSSPVVAESHYSGKTHIKNLRL, KFCKLCHATFNNPLMAEQHYAGKKHKKQETK, and FSCDTCNIVLNSIEQYQAHVSGAKHKNQLMS. Positions 36, 39, 52, 58, 97, 100, 113, and 119 each coordinate Zn(2+). The tract at residues 263 to 343 is disordered; sequence MTPLSKEGPP…QPYVREDMMG (81 aa). Composition is skewed to low complexity over residues 270–289 and 310–323; these read GPPAAGGPSALAGPPSTGGA and GPSSFGGLPPMGGL. Pro residues predominate over residues 324–333; that stretch reads MPPPYPPPHS.

It is found in the nucleus. The protein localises to the cytoplasm. In terms of biological role, binds preferentially to dsRNA, but also to RNA-DNA hybrids. In Xenopus tropicalis (Western clawed frog), this protein is Zinc finger protein 346.